Here is a 361-residue protein sequence, read N- to C-terminus: tRNA/tmRNA (uracil-C(5))-methyltransferase (361 aa).

Residues Gln185, Tyr213, Asn218, Glu234, and Asp294 each coordinate S-adenosyl-L-methionine. Residue Cys319 is the Nucleophile of the active site. Glu353 functions as the Proton acceptor in the catalytic mechanism.

This sequence belongs to the class I-like SAM-binding methyltransferase superfamily. RNA M5U methyltransferase family. TrmA subfamily.

The catalysed reaction is uridine(54) in tRNA + S-adenosyl-L-methionine = 5-methyluridine(54) in tRNA + S-adenosyl-L-homocysteine + H(+). The enzyme catalyses uridine(341) in tmRNA + S-adenosyl-L-methionine = 5-methyluridine(341) in tmRNA + S-adenosyl-L-homocysteine + H(+). Dual-specificity methyltransferase that catalyzes the formation of 5-methyluridine at position 54 (m5U54) in all tRNAs, and that of position 341 (m5U341) in tmRNA (transfer-mRNA). The chain is tRNA/tmRNA (uracil-C(5))-methyltransferase from Pseudomonas putida (strain ATCC 47054 / DSM 6125 / CFBP 8728 / NCIMB 11950 / KT2440).